A 115-amino-acid chain; its full sequence is UPF0102 protein NMB2089 (115 aa).

It belongs to the UPF0102 family.

In Neisseria meningitidis serogroup B (strain ATCC BAA-335 / MC58), this protein is UPF0102 protein NMB2089.